The following is a 427-amino-acid chain: Enolase (427 aa).

Q163 contributes to the (2R)-2-phosphoglycerate binding site. The active-site Proton donor is E205. The Mg(2+) site is built by D242, E285, and D312. Residues K337, R366, S367, and K388 each coordinate (2R)-2-phosphoglycerate. K337 functions as the Proton acceptor in the catalytic mechanism.

It belongs to the enolase family. The cofactor is Mg(2+).

It is found in the cytoplasm. The protein localises to the secreted. It localises to the cell surface. It carries out the reaction (2R)-2-phosphoglycerate = phosphoenolpyruvate + H2O. It participates in carbohydrate degradation; glycolysis; pyruvate from D-glyceraldehyde 3-phosphate: step 4/5. Functionally, catalyzes the reversible conversion of 2-phosphoglycerate (2-PG) into phosphoenolpyruvate (PEP). It is essential for the degradation of carbohydrates via glycolysis. The protein is Enolase of Burkholderia orbicola (strain MC0-3).